Consider the following 384-residue polypeptide: Cyclin-J (384 aa).

One can recognise a Cyclin N-terminal domain in the interval 15–143 (DIHQTLRYKE…LLETFEWNLC (129 aa)).

Belongs to the cyclin family. Cyclin J subfamily.

The sequence is that of Cyclin-J (ccnj) from Xenopus laevis (African clawed frog).